The primary structure comprises 250 residues: DNA repair protein RecO (250 aa).

Belongs to the RecO family.

Its function is as follows. Involved in DNA repair and RecF pathway recombination. The chain is DNA repair protein RecO from Thermodesulfovibrio yellowstonii (strain ATCC 51303 / DSM 11347 / YP87).